A 352-amino-acid polypeptide reads, in one-letter code: Maleylacetate reductase (352 aa).

Residues 93 to 94 (GS) and 115 to 119 (TTYAG) each bind NAD(+).

Belongs to the iron-containing alcohol dehydrogenase family. The cofactor is The maleylacetate reductase family of enzymes does not require any metal ion for activity, despite being related to the family III metal-dependent polyol dehydrogenases..

The enzyme catalyses 3-oxoadipate + NAD(+) = maleylacetate + NADH + H(+). It participates in xenobiotic degradation; gamma-hexachlorocyclohexane degradation. Catalyzes the NADH-dependent reduction of maleylacetate to beta-ketoadipate, a step in the degradation of gamma-hexachlorocyclohexane (gamma-HCH or lindane). Has an essential role in this assimilation pathway that allows S.japonicum UT26 to grow on gamma-HCH as the sole source of carbon and energy. The sequence is that of Maleylacetate reductase from Sphingobium indicum (strain DSM 16413 / CCM 7287 / MTCC 6362 / UT26 / NBRC 101211 / UT26S) (Sphingobium japonicum).